We begin with the raw amino-acid sequence, 67 residues long: Large ribosomal subunit protein bL32 (67 aa).

The segment at 1 to 44 (MAVQQNRKSPSKRDMRRSHDALGFSTLSTDSKSGERHRRHHVTK) is disordered. Residues 11–20 (SKRDMRRSHD) show a composition bias toward basic and acidic residues.

It belongs to the bacterial ribosomal protein bL32 family.

The chain is Large ribosomal subunit protein bL32 from Dichelobacter nodosus (strain VCS1703A).